The following is a 187-amino-acid chain: Ras-like protein rasD (187 aa).

GTP is bound at residue Gly10–Ser17. The Effector region motif lies at Tyr32 to Tyr40. Residues Asp57–Gln61 and Asn116–Asp119 each bind GTP. The residue at position 184 (Cys184) is a Cysteine methyl ester. Cys184 carries S-geranylgeranyl cysteine lipidation. A propeptide spans Leu185–Leu187 (removed in mature form).

This sequence belongs to the small GTPase superfamily. Ras family.

It localises to the cell membrane. It catalyses the reaction GTP + H2O = GDP + phosphate + H(+). With respect to regulation, alternates between an inactive form bound to GDP and an active form bound to GTP. Activated by a guanine nucleotide-exchange factor (GEF) and inactivated by a GTPase-activating protein (GAP). In terms of biological role, ras proteins bind GDP/GTP and possess intrinsic GTPase activity. This is Ras-like protein rasD (rasD) from Dictyostelium discoideum (Social amoeba).